We begin with the raw amino-acid sequence, 488 residues long: Monothiol glutaredoxin-S17 (488 aa).

A Thioredoxin domain is found at 2-107 (SGTVKDIVSK…LANKVGKVAG (106 aa)). 3 Glutaredoxin domains span residues 154 to 256 (KSRL…GITT), 284 to 386 (RARL…GITG), and 391 to 488 (EDRL…TLSE). Lysine 408 contributes to the glutathione binding site. Residue cysteine 416 coordinates [2Fe-2S] cluster. Residues arginine 445, phenylalanine 457, and 470-471 (CD) each bind glutathione.

It belongs to the glutaredoxin family. CGFS subfamily. [2Fe-2S]-bridged holo-homodimer. Interacts in vitro with SUFE1, BOLA1, BOLA2 and BOLA4. Interacts in vivo only with BOLA2. Interacts with RGLG3 and RGLG4. Ubiquitinated at Lys-154. Polyubiquitinated by RGLG3 and RGLG4. Polyubiquitination of GRXS17 leads to its degradation by the proteasome.

The protein resides in the cytoplasm. Functionally, may only reduce GSH-thiol disulfides, but not protein disulfides. Participates probably to the maturation of iron-sulfur proteins and to the regulation of the redox state of the BOLA proteins. The GRXS17-BOLA2 heterodimer binds a labile, oxygen sensitive iron-sulfur cluster. The protein is Monothiol glutaredoxin-S17 of Arabidopsis thaliana (Mouse-ear cress).